Consider the following 63-residue polypeptide: Transmembrane protein ZNF593OS (63 aa).

Residues 30 to 50 (LAGVVATVLAVLGLGGSCYAV) form a helical membrane-spanning segment.

Its subcellular location is the membrane. This Homo sapiens (Human) protein is Transmembrane protein ZNF593OS.